Reading from the N-terminus, the 126-residue chain is Arginine decarboxylase proenzyme (126 aa).

Catalysis depends on serine 74, which acts as the Schiff-base intermediate with substrate; via pyruvic acid. The residue at position 74 (serine 74) is a Pyruvic acid (Ser); by autocatalysis. Residue histidine 79 is the Proton acceptor; for processing activity of the active site. Residue cysteine 94 is the Proton donor; for catalytic activity of the active site.

It belongs to the prokaryotic AdoMetDC family. Type 1 subfamily. As to quaternary structure, heterooctamer of four alpha and four beta chains arranged as a tetramer of alpha/beta heterodimers. Pyruvate is required as a cofactor. Post-translationally, is synthesized initially as an inactive proenzyme. Formation of the active enzyme involves a self-maturation process in which the active site pyruvoyl group is generated from an internal serine residue via an autocatalytic post-translational modification. Two non-identical subunits are generated from the proenzyme in this reaction, and the pyruvate is formed at the N-terminus of the alpha chain, which is derived from the carboxyl end of the proenzyme. The post-translation cleavage follows an unusual pathway, termed non-hydrolytic serinolysis, in which the side chain hydroxyl group of the serine supplies its oxygen atom to form the C-terminus of the beta chain, while the remainder of the serine residue undergoes an oxidative deamination to produce ammonia and the pyruvoyl group blocking the N-terminus of the alpha chain.

The enzyme catalyses L-arginine + H(+) = agmatine + CO2. It functions in the pathway amine and polyamine biosynthesis; agmatine biosynthesis; agmatine from L-arginine: step 1/1. Specifically catalyzes the decarboxylation of L-arginine to agmatine. Has no S-adenosylmethionine decarboxylase (AdoMetDC) activity. In Pyrobaculum islandicum (strain DSM 4184 / JCM 9189 / GEO3), this protein is Arginine decarboxylase proenzyme.